Here is a 352-residue protein sequence, read N- to C-terminus: MSGNTFGKIFTVTTCGESHGDSLAAIIDGCPSNIPLCEADIQLELDRRKPGQSKFTTQRKEPDEVKIISGVFEGKTTGTPIGLIIKNQDQKSKDYSEIKDKFRPGHADYTYFKKYGIRDYRGGGRSSARETAMRVAAGAIAKKILKHYGIEIYGFCSQIGSLKIDFIDKDFINQNPFFIANKNAVPACEDLIHSIRKQGDSIGAEVTVVATGLEAGLGRPVFDRLDASIAYAMMSINAVKAVSIGDGFDCVTQKGSQHRDEITQQQGFLSNHAGGILGGISTGQDIIAKLAFKPTSSILQPGKSIDVQGNDTTVITKGRHDPCVGIRGVPIAEAMLALVLVDELLITRSYRD.

NADP(+) is bound at residue R48. Residues 125–127 (RSS), 237–238 (NA), G278, 293–297 (KPTSS), and R319 contribute to the FMN site.

It belongs to the chorismate synthase family. Homotetramer. FMNH2 serves as cofactor.

The catalysed reaction is 5-O-(1-carboxyvinyl)-3-phosphoshikimate = chorismate + phosphate. It functions in the pathway metabolic intermediate biosynthesis; chorismate biosynthesis; chorismate from D-erythrose 4-phosphate and phosphoenolpyruvate: step 7/7. Its function is as follows. Catalyzes the anti-1,4-elimination of the C-3 phosphate and the C-6 proR hydrogen from 5-enolpyruvylshikimate-3-phosphate (EPSP) to yield chorismate, which is the branch point compound that serves as the starting substrate for the three terminal pathways of aromatic amino acid biosynthesis. This reaction introduces a second double bond into the aromatic ring system. This Francisella tularensis subsp. mediasiatica (strain FSC147) protein is Chorismate synthase.